We begin with the raw amino-acid sequence, 1041 residues long: DNA polymerase catalytic subunit (1041 aa).

The segment at 1-23 is disordered; it reads MAFFNPYFKSKNKGSDMPPKQSM.

It belongs to the DNA polymerase type-B family.

The protein resides in the host nucleus. The catalysed reaction is DNA(n) + a 2'-deoxyribonucleoside 5'-triphosphate = DNA(n+1) + diphosphate. It catalyses the reaction Endonucleolytic cleavage to 5'-phosphomonoester.. Replicates viral genomic DNA. The replication complex is composed of six viral proteins: the DNA polymerase, processivity factor, primase, primase-associated factor, helicase, and ssDNA-binding protein. Additionally, the polymerase contains an intrinsic ribonuclease H (RNase H) activity that specifically degrades RNA/DNA heteroduplexes or duplex DNA substrates in the 5' to 3' direction. Therefore, it can catalyze the excision of the RNA primers that initiate the synthesis of Okazaki fragments at a replication fork during viral DNA replication. This Elephantid herpesvirus 1 (isolate Asian elephant/Berlin/Kiba/1998) (EIHV-1) protein is DNA polymerase catalytic subunit.